An 88-amino-acid polypeptide reads, in one-letter code: MMSKMGAMFVLLLLFTLASSQQEGDVQARKTRPKSDFYRALPRSGSTCTCFTSTNCQGSCECLSPPGCYCSNNGIRQPGCSCTCPGTG.

The N-terminal stretch at 1 to 20 is a signal peptide; it reads MMSKMGAMFVLLLLFTLASS. Residues 21-43 constitute a propeptide that is removed on maturation; the sequence is QQEGDVQARKTRPKSDFYRALPR. The residue at position 87 (threonine 87) is a Threonine amide.

This sequence belongs to the conotoxin S superfamily. Contains 5 disulfide bonds. In terms of processing, the predominant peptide contains 2 hydroxyprolines, while 2 minor peptides contains 1 and 3 hydroxyprolines. Expressed by the venom duct.

It is found in the secreted. In terms of biological role, alpha-conotoxins act on postsynaptic membranes, they bind to the nicotinic acetylcholine receptors (nAChR) and thus inhibit them. This toxin shows high activity on alpha-9-alpha-10 (CHRNA9-CHRNA10) (IC(50)=9.79 nM). It also shows weak activity on alpha-3-beta-2 (CHRNA3-CHRNB2) (IC(50)~1 uM), alpha-6/alpha-3-beta-2-beta-3 (CHRNA6/CHRNA3-CHRNB2-CHRNB3) (IC(50)~1 uM). The toxin binds to the same or overlapping binding sites than conotoxin RgIA (AC P0C1D0). The polypeptide is Alpha-conotoxin GVIIIB (Conus geographus (Geography cone)).